We begin with the raw amino-acid sequence, 414 residues long: MVSTISRHDQNKNNDYLNQPSKEGRFGKYGGQYVPETLMPALFELEKAASDAWKDKQFVDELNHLLKTYVGRETPLYEAKRLTEHYQTKTCTSRIWLKREDLNHTGAHKINNALGQALLAIRMGKERIIAETGAGQHGVATATVCARFGLKCIIYMGAEDIKRQSLNVFRMKLLGAEVKVVTSGTATLKDATSEAIRDWVSNVETTHYILGSVAGPHPFPMIVRDFHAVIGEEAKKQCVESFGSLPDILLACVGGGSNAMGLFHPFVKEKSVRLIGVEAAGSGVNTDKHAATITKGSVGILHGSMSLLLQDKNGQVQEAHSISAGLDYPGVGPEHSYLKDIGRAEYGSVTDTEALNALKLVSELEGIIPALETAHAFAWLEKLCPTLEKNTEIVINCSGRGDKDVNTVASSLDI.

Residues 1–12 show a composition bias toward basic and acidic residues; it reads MVSTISRHDQNK. The interval 1–23 is disordered; the sequence is MVSTISRHDQNKNNDYLNQPSKE. K109 carries the post-translational modification N6-(pyridoxal phosphate)lysine.

Belongs to the TrpB family. Tetramer of two alpha and two beta chains. Pyridoxal 5'-phosphate is required as a cofactor.

It carries out the reaction (1S,2R)-1-C-(indol-3-yl)glycerol 3-phosphate + L-serine = D-glyceraldehyde 3-phosphate + L-tryptophan + H2O. Its pathway is amino-acid biosynthesis; L-tryptophan biosynthesis; L-tryptophan from chorismate: step 5/5. Its function is as follows. The beta subunit is responsible for the synthesis of L-tryptophan from indole and L-serine. This is Tryptophan synthase beta chain from Prochlorococcus marinus (strain MIT 9515).